Consider the following 329-residue polypeptide: DNA-directed RNA polymerase subunit alpha (329 aa).

An alpha N-terminal domain (alpha-NTD) region spans residues 1 to 235 (MQGSVTEFLK…EQLEAFVDLR (235 aa)). An alpha C-terminal domain (alpha-CTD) region spans residues 249-329 (FDPILLRPVD…DWPPASIADE (81 aa)).

Belongs to the RNA polymerase alpha chain family. Homodimer. The RNAP catalytic core consists of 2 alpha, 1 beta, 1 beta' and 1 omega subunit. When a sigma factor is associated with the core the holoenzyme is formed, which can initiate transcription.

It catalyses the reaction RNA(n) + a ribonucleoside 5'-triphosphate = RNA(n+1) + diphosphate. DNA-dependent RNA polymerase catalyzes the transcription of DNA into RNA using the four ribonucleoside triphosphates as substrates. The protein is DNA-directed RNA polymerase subunit alpha of Salmonella choleraesuis (strain SC-B67).